Here is a 131-residue protein sequence, read N- to C-terminus: D-ribose pyranase (131 aa).

His20 acts as the Proton donor in catalysis. Residues Asp28, His98, and 120–122 (YAN) each bind substrate.

It belongs to the RbsD / FucU family. RbsD subfamily. As to quaternary structure, homodecamer.

It localises to the cytoplasm. The catalysed reaction is beta-D-ribopyranose = beta-D-ribofuranose. It participates in carbohydrate metabolism; D-ribose degradation; D-ribose 5-phosphate from beta-D-ribopyranose: step 1/2. Functionally, catalyzes the interconversion of beta-pyran and beta-furan forms of D-ribose. The protein is D-ribose pyranase of Clostridium perfringens (strain 13 / Type A).